A 450-amino-acid chain; its full sequence is UDP-N-acetylmuramoylalanine--D-glutamate ligase (450 aa).

ATP is bound at residue 119–125 (GSNGKTT).

The protein belongs to the MurCDEF family.

Its subcellular location is the cytoplasm. The catalysed reaction is UDP-N-acetyl-alpha-D-muramoyl-L-alanine + D-glutamate + ATP = UDP-N-acetyl-alpha-D-muramoyl-L-alanyl-D-glutamate + ADP + phosphate + H(+). Its pathway is cell wall biogenesis; peptidoglycan biosynthesis. Its function is as follows. Cell wall formation. Catalyzes the addition of glutamate to the nucleotide precursor UDP-N-acetylmuramoyl-L-alanine (UMA). The protein is UDP-N-acetylmuramoylalanine--D-glutamate ligase of Bacillus cereus (strain ATCC 14579 / DSM 31 / CCUG 7414 / JCM 2152 / NBRC 15305 / NCIMB 9373 / NCTC 2599 / NRRL B-3711).